The following is a 311-amino-acid chain: Arginine/serine-rich protein 1 (311 aa).

A disordered region spans residues 1–125 (MSTYVNDMWP…RSRSRSRGRS (125 aa)). Position 12 is a phosphoserine (serine 12). A compositionally biased stretch (low complexity) spans 20-31 (STSRSGGSSRLS). Positions 32–123 (SRSRSRSFSR…RSRSRSRSRG (92 aa)) are enriched in basic residues. A phosphoserine mark is found at serine 109 and serine 111. Omega-N-methylarginine is present on arginine 135.

Belongs to the RSRP family. Post-translationally, phosphorylated. Phosphorylation at Ser-109 and Ser-111 mediates the interaction with spliceosome proteins.

It localises to the nucleus. Its function is as follows. Probably acts as a spliceosomal factor that contributes to spliceosome assembly and regulates the isoform switching of proteins such as PARP6. This chain is Arginine/serine-rich protein 1 (RSRP1), found in Pongo abelii (Sumatran orangutan).